Consider the following 311-residue polypeptide: Methionyl-tRNA formyltransferase (311 aa).

112-115 (SLLP) contacts (6S)-5,6,7,8-tetrahydrofolate.

The protein belongs to the Fmt family.

The catalysed reaction is L-methionyl-tRNA(fMet) + (6R)-10-formyltetrahydrofolate = N-formyl-L-methionyl-tRNA(fMet) + (6S)-5,6,7,8-tetrahydrofolate + H(+). Attaches a formyl group to the free amino group of methionyl-tRNA(fMet). The formyl group appears to play a dual role in the initiator identity of N-formylmethionyl-tRNA by promoting its recognition by IF2 and preventing the misappropriation of this tRNA by the elongation apparatus. This is Methionyl-tRNA formyltransferase from Rhizobium leguminosarum bv. trifolii (strain WSM2304).